The following is a 190-amino-acid chain: Peptidyl-tRNA hydrolase (190 aa).

Tyr-14 is a tRNA binding site. His-19 (proton acceptor) is an active-site residue. TRNA is bound by residues Tyr-64, Asn-66, and Asn-112.

It belongs to the PTH family. In terms of assembly, monomer.

It localises to the cytoplasm. The enzyme catalyses an N-acyl-L-alpha-aminoacyl-tRNA + H2O = an N-acyl-L-amino acid + a tRNA + H(+). Its function is as follows. Hydrolyzes ribosome-free peptidyl-tRNAs (with 1 or more amino acids incorporated), which drop off the ribosome during protein synthesis, or as a result of ribosome stalling. Catalyzes the release of premature peptidyl moieties from peptidyl-tRNA molecules trapped in stalled 50S ribosomal subunits, and thus maintains levels of free tRNAs and 50S ribosomes. The sequence is that of Peptidyl-tRNA hydrolase from Chlorobaculum parvum (strain DSM 263 / NCIMB 8327) (Chlorobium vibrioforme subsp. thiosulfatophilum).